A 432-amino-acid polypeptide reads, in one-letter code: Glucose-6-phosphate isomerase (432 aa).

Catalysis depends on E283, which acts as the Proton donor. Active-site residues include H304 and K418.

Belongs to the GPI family.

The protein localises to the cytoplasm. It carries out the reaction alpha-D-glucose 6-phosphate = beta-D-fructose 6-phosphate. Its pathway is carbohydrate biosynthesis; gluconeogenesis. It participates in carbohydrate degradation; glycolysis; D-glyceraldehyde 3-phosphate and glycerone phosphate from D-glucose: step 2/4. In terms of biological role, catalyzes the reversible isomerization of glucose-6-phosphate to fructose-6-phosphate. The polypeptide is Glucose-6-phosphate isomerase (Rubrobacter xylanophilus (strain DSM 9941 / JCM 11954 / NBRC 16129 / PRD-1)).